Consider the following 157-residue polypeptide: Small ribosomal subunit protein uS7 (157 aa).

Belongs to the universal ribosomal protein uS7 family. Part of the 30S ribosomal subunit. Contacts proteins S9 and S11.

Its function is as follows. One of the primary rRNA binding proteins, it binds directly to 16S rRNA where it nucleates assembly of the head domain of the 30S subunit. Is located at the subunit interface close to the decoding center, probably blocks exit of the E-site tRNA. The polypeptide is Small ribosomal subunit protein uS7 (Caulobacter vibrioides (strain ATCC 19089 / CIP 103742 / CB 15) (Caulobacter crescentus)).